The chain runs to 472 residues: Minor capsid protein L2 (472 aa).

A Nuclear localization signal motif is present at residues 1-12; that stretch reads MVAVRAPRRKRA. Cys21 and Cys27 are joined by a disulfide. A Nuclear localization signal motif is present at residues 453–461; sequence LIHKRRKRM.

Belongs to the papillomaviridae L2 protein family. Interacts with major capsid protein L1. Interacts with E2; this interaction inhibits E2 transcriptional activity but not the DNA replication function E2. Interacts with host GADD45GIP1. Interacts with host HSPA8; this interaction is required for L2 nuclear translocation. Interacts with host importins KPNB2 and KPNB3. Forms a complex with importin alpha2-beta1 heterodimers via interaction with the importin alpha2 adapter. Interacts with host DYNLT1; this interaction is essential for virus intracellular transport during entry. Interacts (via C-terminus) with host retromer subunits VPS35 and VPS29. Post-translationally, highly phosphorylated.

The protein localises to the virion. Its subcellular location is the host nucleus. The protein resides in the host early endosome. It is found in the host Golgi apparatus. Functionally, minor protein of the capsid that localizes along the inner surface of the virion, within the central cavities beneath the L1 pentamers. Plays a role in capsid stabilization through interaction with the major capsid protein L1. Once the virion enters the host cell, L2 escorts the genomic DNA into the nucleus by promoting escape from the endosomal compartments and traffic through the host Golgi network. Mechanistically, the C-terminus of L2 possesses a cell-penetrating peptide that protudes from the host endosome, interacts with host cytoplasmic retromer cargo and thereby mediates the capsid delivery to the host trans-Golgi network. Plays a role through its interaction with host dynein in the intracellular microtubule-dependent transport of viral capsid toward the nucleus. Mediates the viral genome import into the nucleus through binding to host importins. Once within the nucleus, L2 localizes viral genomes to host PML bodies in order to activate early gene expression for establishment of infection. Later on, promotes late gene expression by interacting with the viral E2 protein and by inhibiting its transcriptional activation functions. During virion assembly, encapsidates the genome by direct interaction with the viral DNA. This Homo sapiens (Human) protein is Minor capsid protein L2.